The sequence spans 1756 residues: Transposon Ty1-PR2 Gag-Pol polyprotein (1756 aa).

Composition is skewed to polar residues over residues 1–10, 48–60, and 127–152; these read MESQQLSNYP, TKAN…TPAS, and QSQF…GNTF. Disordered stretches follow at residues 1 to 93, 126 to 173, and 352 to 421; these read MESQ…MMTQ, PQSQ…RPPP, and GSRN…SKST. Positions 153-165 are enriched in low complexity; it reads TDSSSADSDMTST. The RNA-binding stretch occupies residues 299-401; it reads NNGIHINNKV…NSKSKTARAH (103 aa). The span at 402–418 shows a compositional bias: low complexity; the sequence is NVSTSNNSPSTDNDSIS. Catalysis depends on D461, which acts as the For protease activity; shared with dimeric partner. An integrase-type zinc finger-like region spans residues 583–640; the sequence is NVHTSESTRKYPYPFIHRMLAHANAQTIRYSLKNNTITYFNESDVDWSSAIDYQCPDC. Residues 660–836 form the Integrase catalytic domain; that stretch reads NSYEPFQYLH…AGLDISTLLP (177 aa). D671 and D736 together coordinate Mg(2+). Disordered regions lie at residues 957-1088, 1093-1112, and 1131-1188; these read SKAV…ETEK, RSPS…NIVP, and DLPL…DNET. Low complexity predominate over residues 961-970; it reads SPTDSTPPST. The span at 1006-1016 shows a compositional bias: polar residues; that stretch reads STPQISNIEST. The segment covering 1039 to 1054 has biased composition (basic and acidic residues); that stretch reads ESSHASKSKDFRHSDS. Composition is skewed to polar residues over residues 1055 to 1083 and 1102 to 1112; these read YSEN…QISD and PENNSSHNIVP. The short motif at 1179–1213 is the Bipartite nuclear localization signal element; the sequence is KKRSLEDNETEIKVSRDTWNTKNMRSLEPPRSKKR. Residues 1339–1477 enclose the Reverse transcriptase Ty1/copia-type domain; sequence NNYYITQLDI…DILGLEIKYQ (139 aa). Mg(2+) contacts are provided by D1347, D1428, D1429, D1611, E1653, and D1686. In terms of domain architecture, RNase H Ty1/copia-type spans 1611 to 1753; sequence DASYGNQPYY…IKTFKLLTNK (143 aa).

As to quaternary structure, the capsid protein forms a homotrimer, from which the VLPs are assembled. The protease is a homodimer, whose active site consists of two apposed aspartic acid residues. Initially, virus-like particles (VLPs) are composed of the structural unprocessed proteins Gag and Gag-Pol, and also contain the host initiator methionine tRNA (tRNA(i)-Met) which serves as a primer for minus-strand DNA synthesis, and a dimer of genomic Ty RNA. Processing of the polyproteins occurs within the particle and proceeds by an ordered pathway, called maturation. First, the protease (PR) is released by autocatalytic cleavage of the Gag-Pol polyprotein yielding capsid protein p45 and a Pol-p154 precursor protein. This cleavage is a prerequisite for subsequent processing of Pol-p154 at the remaining sites to release the mature structural and catalytic proteins. Maturation takes place prior to the RT reaction and is required to produce transposition-competent VLPs.

Its subcellular location is the cytoplasm. It is found in the nucleus. It carries out the reaction DNA(n) + a 2'-deoxyribonucleoside 5'-triphosphate = DNA(n+1) + diphosphate. The enzyme catalyses Endonucleolytic cleavage to 5'-phosphomonoester.. Capsid protein (CA) is the structural component of the virus-like particle (VLP), forming the shell that encapsulates the retrotransposons dimeric RNA genome. The particles are assembled from trimer-clustered units and there are holes in the capsid shells that allow for the diffusion of macromolecules. CA also has nucleocapsid-like chaperone activity, promoting primer tRNA(i)-Met annealing to the multipartite primer-binding site (PBS), dimerization of Ty1 RNA and initiation of reverse transcription. Functionally, the aspartyl protease (PR) mediates the proteolytic cleavages of the Gag and Gag-Pol polyproteins after assembly of the VLP. In terms of biological role, reverse transcriptase/ribonuclease H (RT) is a multifunctional enzyme that catalyzes the conversion of the retro-elements RNA genome into dsDNA within the VLP. The enzyme displays a DNA polymerase activity that can copy either DNA or RNA templates, and a ribonuclease H (RNase H) activity that cleaves the RNA strand of RNA-DNA heteroduplexes during plus-strand synthesis and hydrolyzes RNA primers. The conversion leads to a linear dsDNA copy of the retrotransposon that includes long terminal repeats (LTRs) at both ends. Its function is as follows. Integrase (IN) targets the VLP to the nucleus, where a subparticle preintegration complex (PIC) containing at least integrase and the newly synthesized dsDNA copy of the retrotransposon must transit the nuclear membrane. Once in the nucleus, integrase performs the integration of the dsDNA into the host genome. This is Transposon Ty1-PR2 Gag-Pol polyprotein (TY1B-PR2) from Saccharomyces cerevisiae (strain ATCC 204508 / S288c) (Baker's yeast).